The following is a 389-amino-acid chain: Glutamate 5-kinase (389 aa).

Residue Lys26 coordinates ATP. 3 residues coordinate substrate: Ser66, Asp153, and Asn167. Residue 187-188 participates in ATP binding; the sequence is TD. The PUA domain occupies 293-371; it reads AGTLFLDQGA…EQIEWILGHR (79 aa).

This sequence belongs to the glutamate 5-kinase family.

Its subcellular location is the cytoplasm. It catalyses the reaction L-glutamate + ATP = L-glutamyl 5-phosphate + ADP. It functions in the pathway amino-acid biosynthesis; L-proline biosynthesis; L-glutamate 5-semialdehyde from L-glutamate: step 1/2. Catalyzes the transfer of a phosphate group to glutamate to form L-glutamate 5-phosphate. This Rhodopirellula baltica (strain DSM 10527 / NCIMB 13988 / SH1) protein is Glutamate 5-kinase.